A 401-amino-acid polypeptide reads, in one-letter code: Probable tRNA sulfurtransferase (401 aa).

One can recognise a THUMP domain in the interval 60 to 165; sequence EPISEQLKGV…EQATYITFKD (106 aa). ATP is bound by residues 183 to 184, 208 to 209, Arg265, Gly287, and Gln296; these read ML and HF.

Belongs to the ThiI family.

Its subcellular location is the cytoplasm. The catalysed reaction is [ThiI sulfur-carrier protein]-S-sulfanyl-L-cysteine + a uridine in tRNA + 2 reduced [2Fe-2S]-[ferredoxin] + ATP + H(+) = [ThiI sulfur-carrier protein]-L-cysteine + a 4-thiouridine in tRNA + 2 oxidized [2Fe-2S]-[ferredoxin] + AMP + diphosphate. It catalyses the reaction [ThiS sulfur-carrier protein]-C-terminal Gly-Gly-AMP + S-sulfanyl-L-cysteinyl-[cysteine desulfurase] + AH2 = [ThiS sulfur-carrier protein]-C-terminal-Gly-aminoethanethioate + L-cysteinyl-[cysteine desulfurase] + A + AMP + 2 H(+). The protein operates within cofactor biosynthesis; thiamine diphosphate biosynthesis. Catalyzes the ATP-dependent transfer of a sulfur to tRNA to produce 4-thiouridine in position 8 of tRNAs, which functions as a near-UV photosensor. Also catalyzes the transfer of sulfur to the sulfur carrier protein ThiS, forming ThiS-thiocarboxylate. This is a step in the synthesis of thiazole, in the thiamine biosynthesis pathway. The sulfur is donated as persulfide by IscS. The sequence is that of Probable tRNA sulfurtransferase from Bacillus pumilus (strain SAFR-032).